A 192-amino-acid chain; its full sequence is Elongation factor P (192 aa).

It belongs to the elongation factor P family.

Its subcellular location is the cytoplasm. The protein operates within protein biosynthesis; polypeptide chain elongation. In terms of biological role, involved in peptide bond synthesis. Stimulates efficient translation and peptide-bond synthesis on native or reconstituted 70S ribosomes in vitro. Probably functions indirectly by altering the affinity of the ribosome for aminoacyl-tRNA, thus increasing their reactivity as acceptors for peptidyl transferase. In Borrelia garinii subsp. bavariensis (strain ATCC BAA-2496 / DSM 23469 / PBi) (Borreliella bavariensis), this protein is Elongation factor P.